A 451-amino-acid polypeptide reads, in one-letter code: Adenylyltransferase and sulfurtransferase MOCS3-2 (451 aa).

The disordered stretch occupies residues 42-62; it reads GEDSDEAEESSNDMPTPQTKL. Over residues 43-52 the composition is skewed to acidic residues; that stretch reads EDSDEAEESS. Threonine 60 is modified (phosphothreonine). Residues glycine 99, aspartate 120, 127-131, lysine 144, and 188-189 contribute to the ATP site; these read SNLHR and DN. Cysteine 229 and cysteine 232 together coordinate Zn(2+). Residue cysteine 246 is the Glycyl thioester intermediate; for adenylyltransferase activity of the active site. Positions 304 and 307 each coordinate Zn(2+). The Rhodanese domain occupies 353-449; that stretch reads QSQPHLLLDV…WTGSVDATFP (97 aa). The active-site Cysteine persulfide intermediate; for sulfurtransferase activity is the cysteine 408.

It in the N-terminal section; belongs to the HesA/MoeB/ThiF family. UBA4 subfamily. It depends on Zn(2+) as a cofactor.

It is found in the cytoplasm. It catalyses the reaction [molybdopterin-synthase sulfur-carrier protein]-C-terminal Gly-Gly + ATP + H(+) = [molybdopterin-synthase sulfur-carrier protein]-C-terminal Gly-Gly-AMP + diphosphate. The enzyme catalyses [molybdopterin-synthase sulfur-carrier protein]-C-terminal Gly-Gly-AMP + S-sulfanyl-L-cysteinyl-[cysteine desulfurase] + AH2 = [molybdopterin-synthase sulfur-carrier protein]-C-terminal-Gly-aminoethanethioate + L-cysteinyl-[cysteine desulfurase] + A + AMP + 2 H(+). It functions in the pathway tRNA modification; 5-methoxycarbonylmethyl-2-thiouridine-tRNA biosynthesis. Its pathway is cofactor biosynthesis; molybdopterin biosynthesis. Plays a central role in 2-thiolation of mcm(5)S(2)U at tRNA wobble positions of cytosolic tRNA(Lys), tRNA(Glu) and tRNA(Gln). Also essential during biosynthesis of the molybdenum cofactor. Acts by mediating the C-terminal thiocarboxylation of sulfur carriers URM1 and MOCS2A. Its N-terminus first activates URM1 and MOCS2A as acyl-adenylates (-COAMP), then the persulfide sulfur on the catalytic cysteine is transferred to URM1 and MOCS2A to form thiocarboxylation (-COSH) of their C-terminus. The reaction probably involves hydrogen sulfide that is generated from the persulfide intermediate and that acts as a nucleophile towards URM1 and MOCS2A. Subsequently, a transient disulfide bond is formed. Does not use thiosulfate as sulfur donor; NFS1 probably acting as a sulfur donor for thiocarboxylation reactions. The chain is Adenylyltransferase and sulfurtransferase MOCS3-2 from Drosophila pseudoobscura pseudoobscura (Fruit fly).